Here is a 530-residue protein sequence, read N- to C-terminus: Carbohydrate sulfotransferase 2 (530 aa).

The Cytoplasmic segment spans residues 1–54; the sequence is MSRSPQRALPPGALPRLLQAAPAAAPRALLPQWPRRPGRRWPASPLGMKVFRRK. Residues 55–75 traverse the membrane as a helical; Signal-anchor for type II membrane protein segment; the sequence is ALVLCAGYALLLVLTMLNLLD. The Lumenal segment spans residues 76 to 530; it reads YKWHKEPLQQ…SKTLLRKPRL (455 aa). The segment at 89–119 is disordered; sequence DGPLGAAAGAAGGSWGRPGPPPAGPPRAHAR. 173–179 is a 3'-phosphoadenylyl sulfate binding site; it reads WRSGSSF. A glycan (N-linked (GlcNAc...) asparagine) is linked at Asn243. Residue 332-340 participates in 3'-phosphoadenylyl sulfate binding; that stretch reads RDPRAVASS. N-linked (GlcNAc...) asparagine glycans are attached at residues Asn457 and Asn475.

This sequence belongs to the sulfotransferase 1 family. Gal/GlcNAc/GalNAc subfamily. Homodimer; disulfide-linked. Homodimerization is not essential for enzyme activity. Glycosylation at Asn-475 is required for catalytic activity. In terms of tissue distribution, widely expressed. Highly expressed in bone marrow, peripheral blood leukocytes, spleen, brain, spinal cord, ovary and placenta. Expressed by high endothelial cells (HEVs) and leukocytes.

It is found in the golgi apparatus. The protein localises to the trans-Golgi network membrane. It carries out the reaction 3-O-{N-acetyl-beta-D-glucosaminyl-(1-&gt;3)-beta-D-galactosyl-(1-&gt;3)-N-acetyl-alpha-D-galactosaminyl}-L-threonyl-[protein] + 3'-phosphoadenylyl sulfate = 3-O-{6-O-sulfo-N-acetyl-beta-D-glucosaminyl-(1-&gt;3)-beta-D-galactosyl-(1-&gt;3)-N-acetyl-alpha-D-galactosaminyl}-L-threonyl-[protein] + adenosine 3',5'-bisphosphate + H(+). The enzyme catalyses 3-O-{N-acetyl-beta-D-glucosaminyl-(1-&gt;3)-beta-D-galactosyl-(1-&gt;3)-N-acetyl-alpha-D-galactosaminyl}-L-seryl-[protein] + 3'-phosphoadenylyl sulfate = 3-O-{6-O-sulfo-N-acetyl-beta-D-glucosaminyl-(1-&gt;3)-beta-D-galactosyl-(1-&gt;3)-N-acetyl-alpha-D-galactosaminyl}-L-seryl-[protein] + adenosine 3',5'-bisphosphate + H(+). It catalyses the reaction a 3-O-{beta-D-galactosyl-(1-&gt;3)-[N-acetyl-beta-D-glucosaminyl-(1-&gt;6)]-N-acetyl-alpha-D-galactosaminyl}-L-threonyl-[protein] + 3'-phosphoadenylyl sulfate = 3-O-{beta-D-galactosyl-(1-&gt;3)-[6-O-sulfo-N-acetyl-beta-D-glucosaminyl-(1-&gt;6)]-N-acetyl-alpha-D-galactosaminyl}-L-threonyl-[protein] + adenosine 3',5'-bisphosphate + H(+). The catalysed reaction is 3-O-{beta-D-galactosyl-(1-&gt;3)-[N-acetyl-beta-D-glucosaminyl-(1-&gt;6)]-N-acetyl-alpha-D-galactosaminyl}-L-seryl-[protein] + 3'-phosphoadenylyl sulfate = 3-O-{beta-D-galactosyl-(1-&gt;3)-[6-O-sulfo-N-acetyl-beta-D-glucosaminyl-(1-&gt;6)]-N-acetyl-alpha-D-galactosaminyl}-L-seryl-[protein] + adenosine 3',5'-bisphosphate + H(+). Its pathway is protein modification; carbohydrate sulfation. Sulfotransferase that utilizes 3'-phospho-5'-adenylyl sulfate (PAPS) as sulfonate donor to catalyze the transfer of sulfate to position 6 of non-reducing N-acetylglucosamine (GlcNAc) residues within keratan-like structures on N-linked glycans and within mucin-associated glycans that can ultimately serve as SELL ligands. SELL ligands are present in high endothelial cells (HEVs) and play a central role in lymphocyte homing at sites of inflammation. Participates in biosynthesis of the SELL ligand sialyl 6-sulfo Lewis X and in lymphocyte homing to Peyer patches. Has no activity toward O-linked sugars. Its substrate specificity may be influenced by its subcellular location. Sulfates GlcNAc residues at terminal, non-reducing ends of oligosaccharide chains. The protein is Carbohydrate sulfotransferase 2 (CHST2) of Homo sapiens (Human).